A 471-amino-acid chain; its full sequence is Histone deacetylase 6 (471 aa).

Methionine 1 bears the N-acetylmethionine mark. The interval 20-333 (RVSYFYEPTI…WCYETAVAVG (314 aa)) is histone deacetylase. Catalysis depends on histidine 153, which acts as the Proton donor/acceptor. 3 residues coordinate Zn(2+): aspartate 188, histidine 190, and aspartate 276. The interval 389-471 (PSVQFQHTPP…PEPDVNPPSS (83 aa)) is disordered. Acidic residues predominate over residues 453 to 463 (GEDEMDDDNPE).

The protein belongs to the histone deacetylase family. HD type 1 subfamily. As to quaternary structure, interacts with Coi1, which functions in an SCF complex that recruits regulators for ubiquitination. Interacts with AHL22. Interacts with AS1. Part of the AS1 repressor complex composed of AS1, LBD6/AS2 and HDA6. Binds to EBS and SHL. Interacts with MBD6. Interacts with HDA5. Interacts with FLD. The cofactor is Zn(2+). In terms of tissue distribution, not detected in leaves, stems, flowers and young siliques.

Its subcellular location is the nucleus. The protein resides in the nucleolus. The enzyme catalyses N(6)-acetyl-L-lysyl-[histone] + H2O = L-lysyl-[histone] + acetate. With respect to regulation, inhibited by trichostatin A. Its function is as follows. Responsible for the deacetylation of lysine residues on the N-terminal part of the core histones (H2A, H2B, H3 and H4). Might remove acetyl residues only from specific targets, such as rDNA repeats or complex transgenes. Histone deacetylation gives a tag for epigenetic repression and plays an important role in transcriptional regulation, cell cycle progression and developmental events. Histone deacetylases act via the formation of large multiprotein complexes. Required for rRNA gene silencing in nucleolar dominance. Plays a role in transgene silencing, but this effect seems to bee independent of the histone deacetylase activity. Part of the AS1 repressor complex to regulate the KNOX expression in leaf development. Binds to KNAT1, KNAT2, and KNATM chromatin. Involved in the regulation of flowering time. Forms a histone deacetylase complex with HDA5, FLD and MSI4/FVE that represses FLC gene expression to control flowering time. This Arabidopsis thaliana (Mouse-ear cress) protein is Histone deacetylase 6.